A 292-amino-acid chain; its full sequence is General transcription factor IIE subunit 2 (292 aa).

Residue Met-1 is modified to N-acetylmethionine. Positions 17-64 are disordered; the sequence is LSTPVVEKRAVPSESPSSSSSKKKKAKVEHGGSSGSKQNSDHNNGSFN. The segment covering 51-63 has biased composition (polar residues); that stretch reads GSKQNSDHNNGSF. The residue at position 62 (Ser-62) is a Phosphoserine. The TFIIE beta DNA-binding region spans 67-147; it reads ALSGSSGYKF…YAFKPKYNLK (81 aa). Lys-75 carries the post-translational modification N6-acetyllysine. Residues 245–277 are disordered; it reads SMQESGPKKVASIQRRKKPASQKKRRFKTHNEH. Residues 258–272 are compositionally biased toward basic residues; it reads QRRKKPASQKKRRFK.

It belongs to the TFIIE beta subunit family. In terms of assembly, tetramer of two alpha and two beta chains. Interacts with FACT subunit SUPT16H. Interacts with ATF7IP. Interacts with SND1. Part of TBP-based Pol II pre-initiation complex (PIC), in which Pol II core assembles with general transcription factors and other specific initiation factors including GTF2E1, GTF2E2, GTF2F1, GTF2F2, TCEA1, ERCC2, ERCC3, GTF2H2, GTF2H3, GTF2H4, GTF2H5, GTF2A1, GTF2A2, GTF2B and TBP; this large multi-subunit PIC complex mediates DNA unwinding and targets Pol II core to the transcription start site where the first phosphodiester bond forms.

Its subcellular location is the nucleus. In terms of biological role, recruits TFIIH to the initiation complex and stimulates the RNA polymerase II C-terminal domain kinase and DNA-dependent ATPase activities of TFIIH. Both TFIIH and TFIIE are required for promoter clearance by RNA polymerase. In Mus musculus (Mouse), this protein is General transcription factor IIE subunit 2 (Gtf2e2).